Reading from the N-terminus, the 421-residue chain is Gamma-glutamyl phosphate reductase (421 aa).

It belongs to the gamma-glutamyl phosphate reductase family.

The protein resides in the cytoplasm. The enzyme catalyses L-glutamate 5-semialdehyde + phosphate + NADP(+) = L-glutamyl 5-phosphate + NADPH + H(+). The protein operates within amino-acid biosynthesis; L-proline biosynthesis; L-glutamate 5-semialdehyde from L-glutamate: step 2/2. Its function is as follows. Catalyzes the NADPH-dependent reduction of L-glutamate 5-phosphate into L-glutamate 5-semialdehyde and phosphate. The product spontaneously undergoes cyclization to form 1-pyrroline-5-carboxylate. This chain is Gamma-glutamyl phosphate reductase, found in Brucella abortus (strain 2308).